The following is an 891-amino-acid chain: Echinoderm microtubule-associated protein-like elp-1 (891 aa).

Residues 77 to 88 (DQSRSPTCSGYS) are compositionally biased toward polar residues. A disordered region spans residues 77–167 (DQSRSPTCSG…ARGSPMRKWV (91 aa)). The segment covering 104–117 (SPSHAPPRSSHANS) has biased composition (low complexity). Positions 118–131 (KSLYINGMNNNSEE) are enriched in polar residues. 9 WD repeats span residues 330 to 401 (GHTC…TLMV), 404 to 447 (GFEK…REGE), 499 to 537 (DKPK…TTKQ), 541 to 579 (VHPG…RTRR), 626 to 664 (GDPG…VEFS), 708 to 747 (EGTA…NLLV), 753 to 792 (HIPA…CDGT), 816 to 853 (SSNG…VTAG), and 859 to 890 (GHGR…EWCL).

This sequence belongs to the WD repeat EMAP family.

The protein resides in the cytoplasm. It localises to the cytoskeleton. In terms of biological role, may modify the assembly dynamics of microtubules, such that microtubules are slightly longer, but more dynamic. The protein is Echinoderm microtubule-associated protein-like elp-1 (elp-1) of Caenorhabditis elegans.